Reading from the N-terminus, the 334-residue chain is MKKIRPLTEADVTAESAFFMQRRQVLKALGISAAALSLPSTAQADLFSWFKGNDRPKAPAGKPLEFSQPAAWRSDLALTPEDKVTGYNNFYEFGLDKADPAANAGSLKTEPWTLKISGEVAKPFTLDYDDLTHRFPLEERIYRMRCVEAWSMVVPWIGFPLYKLLAQAQPTSHAKYVAFETLYAPDDMPGQKDRFIGGGLKYPYVEGLRLDEAMHPLTLMTVGVYGKALPPQNGAPIRLIVPWKYGFKGIKSVVSIKLTRERPPTTWNLSAPNEYGFYANVNPHVDHPRWSQATERFIGSGGILDVQRQPTLLFNGYANEVASLYRGLNLRENF.

The tat-type signal signal peptide spans 1 to 44 (MKKIRPLTEADVTAESAFFMQRRQVLKALGISAAALSLPSTAQA). Residues Asn-88, 91 to 92 (YE), Cys-146, Thr-181, Asn-233, Arg-238, and 249 to 251 (GIK) contribute to the Mo-molybdopterin site.

The protein belongs to the MsrP family. Heterodimer of a catalytic subunit (MsrP) and a heme-binding subunit (MsrQ). Mo-molybdopterin is required as a cofactor. In terms of processing, predicted to be exported by the Tat system. The position of the signal peptide cleavage has not been experimentally proven.

Its subcellular location is the periplasm. It catalyses the reaction L-methionyl-[protein] + a quinone + H2O = L-methionyl-(S)-S-oxide-[protein] + a quinol. The enzyme catalyses L-methionyl-[protein] + a quinone + H2O = L-methionyl-(R)-S-oxide-[protein] + a quinol. Functionally, part of the MsrPQ system that repairs oxidized periplasmic proteins containing methionine sulfoxide residues (Met-O), using respiratory chain electrons. Thus protects these proteins from oxidative-stress damage caused by reactive species of oxygen and chlorine generated by the host defense mechanisms. MsrPQ is essential for the maintenance of envelope integrity under bleach stress, rescuing a wide series of structurally unrelated periplasmic proteins from methionine oxidation, including the primary periplasmic chaperone SurA and the lipoprotein Pal. The catalytic subunit MsrP is non-stereospecific, being able to reduce both (R-) and (S-) diastereoisomers of methionine sulfoxide. The polypeptide is Protein-methionine-sulfoxide reductase catalytic subunit MsrP (Salmonella agona (strain SL483)).